Consider the following 220-residue polypeptide: Tegument protein UL51 homolog (220 aa).

Cys11 carries the S-palmitoyl cysteine; by host lipid modification.

The protein belongs to the herpesviridae UL51 family. Oligomerizes. Interacts with UL7 homolog; this interaction mediates UL7 homolog incorporation to virions. Phosphorylated. In terms of processing, palmitoylation is necessary for Golgi localization.

It localises to the virion tegument. It is found in the host cytoplasm. Its subcellular location is the host Golgi apparatus. In terms of biological role, plays several roles during the time course of infection, including egress of virus particles from the perinuclear space and secondary envelopment of cytoplasmic capsids that bud into specific trans-Golgi network (TGN)-derived membranes. The protein is Tegument protein UL51 homolog (55) of Connochaetes taurinus (Blue wildebeest).